The chain runs to 2514 residues: Probable polyketide synthase 8/35 (2514 aa).

The region spanning 11 to 442 (DKGVAIVGVG…GSNCCLLISE (432 aa)) is the Ketosynthase family 3 (KS3) domain. Active-site for beta-ketoacyl synthase activity residues include Cys181, His323, and His362. Positions 635–668 (GVNPSFILGHSLGEISAAYCSGMIDLDTFCYTVY) are acyl/malonyl transferase. Ser645 acts as the For acyl/malonyl transferase activity in catalysis. The interval 925–1047 (IDHLGLSNSY…ANFQLLDHGN (123 aa)) is N-terminal hotdog fold. A PKS/mFAS DH domain is found at 925-1209 (IDHLGLSNSY…FKSLIPIKHS (285 aa)). His959 functions as the Proton acceptor; for dehydratase activity in the catalytic mechanism. The C-terminal hotdog fold stretch occupies residues 1064 to 1209 (NLSKLTKNEL…FKSLIPIKHS (146 aa)). Asp1122 serves as the catalytic Proton donor; for dehydratase activity. The region spanning 2431–2508 (IGNKNIDELF…ISIKMILNSL (78 aa)) is the Carrier domain. Ser2468 carries the O-(pantetheine 4'-phosphoryl)serine modification.

Requires pantetheine 4'-phosphate as cofactor.

In terms of biological role, probable polyketide synthase. The sequence is that of Probable polyketide synthase 8/35 (pks8) from Dictyostelium discoideum (Social amoeba).